The sequence spans 344 residues: 17-beta-hydroxysteroid dehydrogenase type 1 (344 aa).

Residue 3–32 (PTVVLITGCSSGIGMHLAVRLASDRSQSFK) participates in NAD(+) binding. Residues 10–38 (GCSS…ATLR) and Asp66 contribute to the NADP(+) site. Ser135 carries the post-translational modification Phosphoserine. Ser143 lines the substrate pocket. The Proton acceptor role is filled by Tyr156. An NADP(+)-binding site is contributed by Lys160.

This sequence belongs to the short-chain dehydrogenases/reductases (SDR) family. Homodimer. Exists predominantly as a homodimer but also exits as monomer.

It is found in the cytoplasm. The enzyme catalyses 17beta-estradiol + NAD(+) = estrone + NADH + H(+). It catalyses the reaction 17beta-estradiol + NADP(+) = estrone + NADPH + H(+). It carries out the reaction testosterone + NADP(+) = androst-4-ene-3,17-dione + NADPH + H(+). It participates in steroid biosynthesis; estrogen biosynthesis. In terms of biological role, favors the reduction of estrogens and androgens. Converts estrone (E1) to a more potent estrogen, 17beta-estradiol (E2). Also has 20-alpha-HSD activity. Uses preferentially NADH. This chain is 17-beta-hydroxysteroid dehydrogenase type 1, found in Mus musculus (Mouse).